We begin with the raw amino-acid sequence, 247 residues long: Calpain small subunit 2 (247 aa).

Positions 88, 91, 93, 131, 133, 135, 137, 142, 161, 163, 165, and 204 each coordinate Ca(2+). 4 consecutive EF-hand domains span residues 118-151 (FSLDTCRSIVSVMDSDTTGKLGFEEFKYLWNNIK), 148-183 (NNIKKWQCVFKQYDSDHSGSLGSSQLHGAMQAAGFQ), 184-212 (LNEQLYLMIVRRYADEDGGMDFNNFISCL), and 213-247 (VRLDAMFRAFKALDRDRDGLIQVSIREWLQLTMYS).

Heterodimer of a large (catalytic) and a small (regulatory) subunit.

Its subcellular location is the cytoplasm. It is found in the cell membrane. Calcium-regulated non-lysosomal thiol-protease which catalyzes limited proteolysis of substrates involved in cytoskeletal remodeling and signal transduction. This small subunit may act as a tissue-specific chaperone of the large subunit, possibly by helping it fold into its correct conformation for activity. This Mus musculus (Mouse) protein is Calpain small subunit 2 (Capns2).